The primary structure comprises 625 residues: Grainyhead-like protein 2 homolog (625 aa).

Disordered regions lie at residues 1 to 24 (MSQE…PPFN), 82 to 112 (VSKA…GGEN), and 428 to 453 (EERK…SDGK). The transcription activation stretch occupies residues 1 to 93 (MSQESDNNKR…KASDSQEDQE (93 aa)). 2 stretches are compositionally biased toward polar residues: residues 98–109 (LGTSEAQSNLSG) and 440–451 (QASQTQCNSSSD). The region spanning 244–482 (SSGTFQYTLE…DLHSQPVLFI (239 aa)) is the Grh/CP2 DB domain.

Belongs to the grh/CP2 family. Grainyhead subfamily. As to quaternary structure, homodimer, also forms heterodimers with GRHL1 or GRHL3. As to expression, expressed in keratinocytes (at protein level). Highly expressed in placenta, prostate, brain and kidney. Lower-level expression in a variety of epithelial tissues such as thymus, lung, salivary gland, mammary gland and digestive tract. Expressed in the cochlear. Expressed in corneal epithelial cells, but not in the endothelium or stroma.

Its subcellular location is the nucleus. It is found in the membrane. Its function is as follows. Transcription factor playing an important role in primary neurulation and in epithelial development. Binds directly to the consensus DNA sequence 5'-AACCGGTT-3' acting as an activator and repressor on distinct target genes. During embryogenesis, plays unique and cooperative roles with GRHL3 in establishing distinct zones of primary neurulation. Essential for closure 3 (rostral end of the forebrain), functions cooperatively with GRHL3 in closure 2 (forebrain/midbrain boundary) and posterior neuropore closure. Regulates epithelial morphogenesis acting as a target gene-associated transcriptional activator of apical junctional complex components. Up-regulates of CLDN3 and CLDN4, as well as of RAB25, which increases the CLDN4 protein and its localization at tight junctions. Comprises an essential component of the transcriptional machinery that establishes appropriate expression levels of CLDN4 and CDH1 in different types of epithelia. Exhibits functional redundancy with GRHL3 in epidermal morphogenetic events and epidermal wound repair. In lung, forms a regulatory loop with NKX2-1 that coordinates lung epithelial cell morphogenesis and differentiation. In keratinocytes, plays a role in telomerase activation during cellular proliferation, regulates TERT expression by binding to TERT promoter region and inhibiting DNA methylation at the 5'-CpG island, possibly by interfering with DNMT1 enzyme activity. In addition, impairs keratinocyte differentiation and epidermal function by inhibiting the expression of genes clustered at the epidermal differentiation complex (EDC) as well as GRHL1 and GRHL3 through epigenetic mechanisms. The protein is Grainyhead-like protein 2 homolog (GRHL2) of Homo sapiens (Human).